Reading from the N-terminus, the 317-residue chain is tRNA-dihydrouridine(20a/20b) synthase [NAD(P)+]-like (317 aa).

FMN-binding positions include 33-35 (PMV) and Gln-87. The Proton donor role is filled by Cys-116. FMN is bound by residues Lys-158, His-186, 216–218 (NGD), and 240–241 (AR).

The protein belongs to the Dus family. Dus4 subfamily. The cofactor is FMN.

The catalysed reaction is 5,6-dihydrouridine(20a) in tRNA + NADP(+) = uridine(20a) in tRNA + NADPH + H(+). It carries out the reaction 5,6-dihydrouridine(20a) in tRNA + NAD(+) = uridine(20a) in tRNA + NADH + H(+). It catalyses the reaction 5,6-dihydrouridine(20b) in tRNA + NAD(+) = uridine(20b) in tRNA + NADH + H(+). The enzyme catalyses 5,6-dihydrouridine(20b) in tRNA + NADP(+) = uridine(20b) in tRNA + NADPH + H(+). Functionally, catalyzes the synthesis of dihydrouridine, a modified base found in the D-loop of most tRNAs. In Homo sapiens (Human), this protein is tRNA-dihydrouridine(20a/20b) synthase [NAD(P)+]-like (DUS4L).